Reading from the N-terminus, the 285-residue chain is MAAARLSHRMGRLLEKAPALGPWTRVYSTSPAFAEVLRLPQKQLTKVVYPLRELGQHLAADSGPGLIEQRLFDPSLEDIGRAESIFEATARNRIEYLSSAVRLDHAPSLQQPEVCFIGRSNVGKSSLIKALFSLAPDVEVRISKKPGHTKKMNFFKVGKHFTLVDMPGYGYRAPEDFVDMVETYLKERNNLKRTFLLVDSVVGITKLDNIAIEMCEEFALPYVMILTKIDKSSKGYLLKQVLQIQKFVNTQTQGCFPQLFPISAVTNSGVHLLKCFIADITGSLK.

Residues 110–283 form the EngB-type G domain; sequence QQPEVCFIGR…KCFIADITGS (174 aa). GTP-binding positions include 118–125, 147–151, 165–168, 227–230, and 262–264; these read GRSNVGKS, GHTKK, DMPG, TKID, and ISA. Positions 125 and 149 each coordinate Mg(2+).

This sequence belongs to the TRAFAC class TrmE-Era-EngA-EngB-Septin-like GTPase superfamily. EngB GTPase family. Mg(2+) serves as cofactor.

This is GTP-binding protein 8 (Gtpbp8) from Mus musculus (Mouse).